Here is a 557-residue protein sequence, read N- to C-terminus: Formate--tetrahydrofolate ligase (557 aa).

An ATP-binding site is contributed by S65–T72.

The protein belongs to the formate--tetrahydrofolate ligase family.

The catalysed reaction is (6S)-5,6,7,8-tetrahydrofolate + formate + ATP = (6R)-10-formyltetrahydrofolate + ADP + phosphate. It functions in the pathway one-carbon metabolism; tetrahydrofolate interconversion. The chain is Formate--tetrahydrofolate ligase from Methylobacillus flagellatus (strain ATCC 51484 / DSM 6875 / VKM B-1610 / KT).